We begin with the raw amino-acid sequence, 164 residues long: Anthrone oxygenase AgnL2 (164 aa).

The next 3 helical transmembrane spans lie at 11–31 (VVTG…AVPV), 48–70 (RMYH…LYAY), and 85–105 (VFAL…LCMV).

The protein belongs to the anthrone oxygenase family.

Its subcellular location is the membrane. It carries out the reaction emodin anthrone + O2 = emodin + H2O + H(+). It functions in the pathway secondary metabolite biosynthesis. In terms of biological role, anthrone oxygenase; part of the gene cluster that mediates the biosynthesis of agnestins, dihydroxy-xanthone metabolites. The pathway begins with the assembly and cyclization of atrochrysone thioester by the non-reducing polyketide synthase Agnpks1. The atrochrysone carboxyl ACP thioesterase AgnL7 then breaks the thioester bond and releases the atrochrysone carboxylic acid as the first enzyme-free intermediate. The decarboxylase AgnL1 then catalyzes the concerted decarboxylation-elimination required to convert atochrysone carboxylic acid into emodin anthrone, which is further oxidized to emodin by the anthrone oxygenase AgnL2. Emodin then undergoes reduction catalyzed by the oxidoreductase AgnL4 to yield the dihydroquinone tautomer which is the substrate for reduction by the short chain dehydrogenase AgnL6 reduction to produce hydroxyketone, followed by AgnL8 dehydration and likely spontaneous autoxidation to chrysophanol. Baeyer-Villiger oxidation by the oxidase AgnL3 leads to monodictyphenone via cleavage of the C-10/C-10a bond of chrysophanol. Alternative cleavage at the C-4a/C-10 bond of chrysophanol also leads to the formation some cephalone F. Further conversion to agnestins A and B, requires reduction to dihydro-monodictyphenone, oxidation to agnestin C probably via an epoxide, and rearrangement to either agnestin A or agnestin B directly, although agnestin A or agnestin B can also interconvert. Within the cluster, AgnR1 is the only unassigned oxidoreductase present which could be involved in this conversion. However, AgnR1 seems not to be involved in this step, and thus genes involved in the proposed oxidation/reduction may be located elsewhere on the genome. Further agnestin A derivatives are probably formed by spontaneous decarboxylations, dehydrations and methanolysis reactions. The polypeptide is Anthrone oxygenase AgnL2 (Paecilomyces divaricatus (Penicillium divaricatum)).